Here is a 297-residue protein sequence, read N- to C-terminus: Syntaxin-4 (297 aa).

Positions 1 to 12 (MRDRTHELRQGD) are enriched in basic and acidic residues. The disordered stretch occupies residues 1 to 21 (MRDRTHELRQGDDSSDDEDKE). Residues 1–275 (MRDRTHELRQ…QKKARKKKVF (275 aa)) lie on the Cytoplasmic side of the membrane. A phosphoserine mark is found at S14 and S15. Phosphothreonine is present on T31. A phosphoserine mark is found at S36, S117, S208, and S248. Residues 43–163 (QKVRTIRQTI…ERIRRQLKIT (121 aa)) are a coiled coil. A t-SNARE coiled-coil homology domain is found at 200-262 (LNEISARHSE…ERGQEHVKVA (63 aa)). Residues 276-296 (IAICLSITVLILVVIIVISTL) form a helical; Anchor for type IV membrane protein membrane-spanning segment. Residue V297 is a topological domain, extracellular.

It belongs to the syntaxin family. Component of the SNARE complex composed of STX4, SNAP23 and VAMP7 that interacts with SYT7 during lysosomal exocytosis. Found in a complex with VAMP8 and SNAP23. Detected in a complex with SNAP23 and STXBP4. Interacts with VAMP2. Interacts with SNAP23 and SNAPIN. Interacts with LLGL1. Interacts (via C-terminus) with CENPF. Interacts with DOC2B. Interacts with STXBP6. Interacts with STXBP3; excludes interaction with DOC2B and SNAP25. Interacts with STXBP4; excludes interaction with VAMP2. Interacts with STXBP5L.

It localises to the cell membrane. It is found in the cell projection. Its subcellular location is the neuron projection. The protein resides in the stereocilium. Plasma membrane t-SNARE that mediates docking of transport vesicles. Necessary for the translocation of SLC2A4 from intracellular vesicles to the plasma membrane. In neurons, recruited at neurite tips to membrane domains rich in the phospholipid 1-oleoyl-2-palmitoyl-PC (OPPC) which promotes neurite tip surface expression of the dopamine transporter SLC6A3/DAT by facilitating fusion of SLC6A3-containing transport vesicles with the plasma membrane. Together with STXB3 and VAMP2, may also play a role in docking/fusion of intracellular GLUT4-containing vesicles with the cell surface in adipocytes and in docking of synaptic vesicles at presynaptic active zones. Required for normal hearing. The polypeptide is Syntaxin-4 (STX4) (Bos taurus (Bovine)).